Reading from the N-terminus, the 1072-residue chain is DNA-directed RNA polymerase subunit beta (1072 aa).

This sequence belongs to the RNA polymerase beta chain family. In terms of assembly, in plastids the minimal PEP RNA polymerase catalytic core is composed of four subunits: alpha, beta, beta', and beta''. When a (nuclear-encoded) sigma factor is associated with the core the holoenzyme is formed, which can initiate transcription.

It localises to the plastid. It is found in the chloroplast. It catalyses the reaction RNA(n) + a ribonucleoside 5'-triphosphate = RNA(n+1) + diphosphate. Functionally, DNA-dependent RNA polymerase catalyzes the transcription of DNA into RNA using the four ribonucleoside triphosphates as substrates. The chain is DNA-directed RNA polymerase subunit beta from Lobularia maritima (Sweet alyssum).